The primary structure comprises 178 residues: Caveolin-1 (178 aa).

Serine 2 is modified (N-acetylserine). Serine 2 carries the post-translational modification Phosphoserine. A required for homooligomerization region spans residues 2–94 (SGGKYVDSEG…WKASFTTFTV (93 aa)). Residues 2–104 (SGGKYVDSEG…TKYWFYRLLS (103 aa)) lie on the Cytoplasmic side of the membrane. N6-acetyllysine; alternate is present on lysine 5. Residue lysine 5 forms a Glycyl lysine isopeptide (Lys-Gly) (interchain with G-Cter in ubiquitin); alternate linkage. Tyrosine 6 carries the phosphotyrosine modification. Serine 9 carries the phosphoserine modification. Tyrosine 14 is subject to Phosphotyrosine; by ABL1. Phosphotyrosine is present on tyrosine 25. Residues lysine 26, lysine 30, lysine 39, lysine 47, and lysine 57 each participate in a glycyl lysine isopeptide (Lys-Gly) (interchain with G-Cter in ubiquitin) cross-link. The interval 82 to 94 (DGIWKASFTTFTV) is interaction with CAVIN3. The segment at residues 105 to 125 (TIFGIPMALIWGIYFAILSFL) is an intramembrane region (helical). Topologically, residues 126–178 (HIWAVVPCIKSFLIEIQCISRVYSIYVHTFCDPLFEAIGKIFSNVRISMQKEI) are cytoplasmic. An interacts with SPRY1, SPRY2, SPRY3 and SPRY4 region spans residues 131–142 (VPCIKSFLIEIQ). Residues cysteine 133, cysteine 143, and cysteine 156 are each lipidated (S-palmitoyl cysteine). Positions 149–160 (SIYVHTFCDPLF) are interacts with SPRY1, SPRY2, and SPRY4. The segment at 167–178 (FSNVRISMQKEI) is interacts with SPRY1, SPRY2, SPRY3 and SPRY4.

Belongs to the caveolin family. In terms of assembly, homooligomer. Interacts with GLIPR2. Interacts with NOSTRIN. Interacts with SNAP25 and STX1A. Interacts (via the N-terminus) with DPP4; the interaction is direct. Interacts with CTNNB1, CDH1 and JUP. Interacts with PACSIN2; this interaction induces membrane tubulation. Interacts with SLC7A9. Interacts with BMX and BTK. Interacts with TGFBR1. Interacts with CAVIN3 (via leucine-zipper domain) in a cholesterol-sensitive manner. Interacts with CAVIN1. Interacts with EHD2 in a cholesterol-dependent manner. Forms a ternary complex with UBXN6 and VCP; mediates CAV1 targeting to lysosomes for degradation. Interacts with ABCG1; this interaction regulates ABCG1-mediated cholesterol efflux. Interacts with NEU3; this interaction enhances NEU3 sialidase activity within caveola. Interacts (via C-terminus) with SPRY1, SPRY2 (via C-terminus), SPRY3, and SPRY4. Interacts with IGFBP5; this interaction allows trafficking of IGFBP5 from the plasma membrane to the nucleus. Phosphorylated at Tyr-14 by ABL1 in response to oxidative stress. Post-translationally, ubiquitinated. Undergo monoubiquitination and multi- and/or polyubiquitination. Monoubiquitination of N-terminal lysines promotes integration in a ternary complex with UBXN6 and VCP which promotes oligomeric CAV1 targeting to lysosomes for degradation. Ubiquitinated by ZNRF1; leading to degradation and modulation of the TLR4-mediated immune response.

It is found in the golgi apparatus membrane. Its subcellular location is the cell membrane. The protein localises to the membrane. The protein resides in the caveola. It localises to the membrane raft. Functionally, may act as a scaffolding protein within caveolar membranes. Forms a stable heterooligomeric complex with CAV2 that targets to lipid rafts and drives caveolae formation. Mediates the recruitment of CAVIN proteins (CAVIN1/2/3/4) to the caveolae. Interacts directly with G-protein alpha subunits and can functionally regulate their activity. Involved in the costimulatory signal essential for T-cell receptor (TCR)-mediated T-cell activation. Its binding to DPP4 induces T-cell proliferation and NF-kappa-B activation in a T-cell receptor/CD3-dependent manner. Recruits CTNNB1 to caveolar membranes and may regulate CTNNB1-mediated signaling through the Wnt pathway. Negatively regulates TGFB1-mediated activation of SMAD2/3 by mediating the internalization of TGFBR1 from membrane rafts leading to its subsequent degradation. Binds 20(S)-hydroxycholesterol (20(S)-OHC). In Oryctolagus cuniculus (Rabbit), this protein is Caveolin-1 (CAV1).